Here is a 500-residue protein sequence, read N- to C-terminus: V-type proton ATPase subunit B (500 aa).

The protein belongs to the ATPase alpha/beta chains family. As to quaternary structure, V-ATPase is a heteromultimeric enzyme composed of a peripheral catalytic V1 complex (main components: subunits A, B, C, D, E, and F) attached to an integral membrane V0 proton pore complex (main component: the proteolipid protein).

Functionally, non-catalytic subunit of the peripheral V1 complex of vacuolar ATPase. V-ATPase is responsible for acidifying a variety of intracellular compartments in eukaryotic cells. This is V-type proton ATPase subunit B from Cyanidium caldarium (Red alga).